Consider the following 195-residue polypeptide: Imidazoleglycerol-phosphate dehydratase (195 aa).

This sequence belongs to the imidazoleglycerol-phosphate dehydratase family.

Its subcellular location is the cytoplasm. It catalyses the reaction D-erythro-1-(imidazol-4-yl)glycerol 3-phosphate = 3-(imidazol-4-yl)-2-oxopropyl phosphate + H2O. Its pathway is amino-acid biosynthesis; L-histidine biosynthesis; L-histidine from 5-phospho-alpha-D-ribose 1-diphosphate: step 6/9. This Cupriavidus pinatubonensis (strain JMP 134 / LMG 1197) (Cupriavidus necator (strain JMP 134)) protein is Imidazoleglycerol-phosphate dehydratase.